An 82-amino-acid polypeptide reads, in one-letter code: Small ribosomal subunit protein bS18 (82 aa).

It belongs to the bacterial ribosomal protein bS18 family. Part of the 30S ribosomal subunit. Forms a tight heterodimer with protein bS6.

Its function is as follows. Binds as a heterodimer with protein bS6 to the central domain of the 16S rRNA, where it helps stabilize the platform of the 30S subunit. This chain is Small ribosomal subunit protein bS18, found in Chlamydia caviae (strain ATCC VR-813 / DSM 19441 / 03DC25 / GPIC) (Chlamydophila caviae).